The chain runs to 132 residues: MSKSLNIIWQYLRAFVLIYACLYAGIFIASLLPITIPGSIIGMLILFVLLALQILPAKWVNPGCYVLIRYMALLFVPIGVGVMQYFDLLRAQFGPVVVSCAISTLVVFLVVSWSSHIVHGERKVLGQKGSKK.

The next 4 membrane-spanning stretches (helical) occupy residues Ile-7–Phe-27, Leu-31–Ala-51, Gly-63–Met-83, and Phe-93–Trp-113.

It belongs to the UPF0299 family.

The protein resides in the cell inner membrane. The protein is UPF0299 membrane protein CKO_00648 of Citrobacter koseri (strain ATCC BAA-895 / CDC 4225-83 / SGSC4696).